A 736-amino-acid chain; its full sequence is Dimethylamine dehydrogenase (736 aa).

Cys31 carries the S-6-FMN cysteine modification. 176–179 (YGAH) lines the substrate pocket. Tyr181 (proton donor) is an active-site residue. The FMN site is built by Arg229 and Arg329. [4Fe-4S] cluster contacts are provided by Cys352, Cys355, Cys358, and Cys371. 398-427 (DVLIVGAGPAGSECARVLMERGYTVHLVDT) contacts ADP.

This sequence in the N-terminal section; belongs to the NADH:flavin oxidoreductase/NADH oxidase family. It depends on FMN as a cofactor. [4Fe-4S] cluster is required as a cofactor.

The catalysed reaction is dimethylamine + oxidized [electron-transfer flavoprotein] + H2O + H(+) = methylamine + reduced [electron-transfer flavoprotein] + formaldehyde. In Hyphomicrobium sp. (strain x), this protein is Dimethylamine dehydrogenase (dmd).